The following is a 727-amino-acid chain: Pollen-specific leucine-rich repeat extensin-like protein 3 (727 aa).

Residues 1–22 (MPHIYKQPLGIFQGFVPTLTDA) form the signal peptide. The LRR 1 repeat unit spans residues 19–43 (LTDAEVSFIAQRQLLTLPENGELPD). The N-linked (GlcNAc...) asparagine glycan is linked to N80. 9 LRR repeats span residues 107–131 (VAVV…LGLM), 132–154 (TDVA…SFEK), 156–179 (SLMH…VLSW), 180–202 (PAVK…ELFK), 203–226 (KDLD…LGES), 228–249 (ASVV…IGNM), 250–273 (KNLN…IGKL), 275–296 (NVNV…SFVG), and 297–321 (LTSM…ICKL). A glycan (N-linked (GlcNAc...) asparagine) is linked at N326. The tract at residues 381-727 (SKDKCAGGSS…SPPPPMFQGY (347 aa)) is disordered. Pro residues-rich tracts occupy residues 397 to 419 (SPSP…PQPN), 446 to 457 (SPPPASSPPTSP), 466 to 479 (VHKP…PQPN), 492 to 677 (SPPP…PKMS), and 718 to 727 (SPPPPMFQGY). The interval 432 to 727 (SPPPPQQPHH…SPPPPMFQGY (296 aa)) is contains the Ser-Pro(4) repeats.

In terms of processing, hydroxylated on proline residues in the S-P-P-P-P repeat. Post-translationally, O-glycosylated on hydroxyprolines. In terms of tissue distribution, expressed in flowers, stamen, pollen, and pollinated carpels.

It localises to the secreted. The protein resides in the cell wall. Modulates cell morphogenesis by regulating cell wall formation and assembly, and/or growth polarization. The sequence is that of Pollen-specific leucine-rich repeat extensin-like protein 3 (PEX3) from Arabidopsis thaliana (Mouse-ear cress).